The chain runs to 680 residues: Tumor protein 63 (680 aa).

The tract at residues 1-107 (MNFETSRCAT…MQDSDLSDPM (107 aa)) is transcription activation. The span at 122 to 157 (QQIQNGSSSTSPYNTDHAQNSVTAPSPYAQPSSTFD) shows a compositional bias: polar residues. Residues 122-171 (QQIQNGSSSTSPYNTDHAQNSVTAPSPYAQPSSTFDALSPSPAIPSNTDY) form a disordered region. A DNA-binding region spans residues 170-362 (DYPGPHSFDV…KADEDSIRKQ (193 aa)). Residues Cys244, His247, Cys308, and Cys312 each coordinate Zn(2+). Basic and acidic residues predominate over residues 351 to 360 (DRKADEDSIR). 2 disordered regions span residues 351-393 (DRKA…IKKR) and 436-472 (RQQQQQQHQHLLQKQTSMQSQSSYGNSSPPLNKMNSM). The segment at 352–388 (RKADEDSIRKQQVSDSAKNGDGTKRPFRQNTHGIQMT) is interaction with HIPK2. Residues 379–389 (RQNTHGIQMTS) show a composition bias toward polar residues. Residues 394 to 443 (RSPDDELLYLPVRGRETYEMLLKIKESLELMQYLPQHTIETYRQQQQQQH) form an oligomerization region. Residues 437–463 (QQQQQQHQHLLQKQTSMQSQSSYGNSS) are compositionally biased toward low complexity. The 67-residue stretch at 541–607 (PPYPTDCSIV…WKGILDHRQL (67 aa)) folds into the SAM domain. The transactivation inhibition stretch occupies residues 610 to 680 (FSSPPHLLRT…KQQRIKEEGE (71 aa)). Residue Lys676 forms a Glycyl lysine isopeptide (Lys-Gly) (interchain with G-Cter in SUMO) linkage.

The protein belongs to the p53 family. As to quaternary structure, binds DNA as a homotetramer. Isoform composition of the tetramer may determine transactivation activity. Interacts with HIPK2. Interacts with SSRP1, leading to stimulate coactivator activity. Interacts with WWP1. Interacts with PDS5A. Interacts (via activation domain) with NOC2L. Zn(2+) serves as cofactor. May be sumoylated. In terms of processing, ubiquitinated. Polyubiquitination involves WWP1 and leads to proteasomal degradation of this protein. As to expression, widely expressed, notably in thymus, prostate, placenta, and skeletal muscle, although the precise isoform varies according to tissue type. Progenitor cell layers of skin, breast and prostate express high levels of DeltaN-type isoforms.

It localises to the nucleus. Acts as a sequence specific DNA binding transcriptional activator or repressor. The isoforms contain a varying set of transactivation and auto-regulating transactivation inhibiting domains thus showing an isoform specific activity. May be required in conjunction with TP73/p73 for initiation of p53/TP53 dependent apoptosis in response to genotoxic insults and the presence of activated oncogenes. Involved in Notch signaling by probably inducing JAG1 and JAG2. Activates RIPK4 transcription. Plays a role in the regulation of epithelial morphogenesis. The ratio of DeltaN-type and TA*-type isoforms may govern the maintenance of epithelial stem cell compartments and regulate the initiation of epithelial stratification from the undifferentiated embryonal ectoderm. Required for limb formation from the apical ectodermal ridge. Activates transcription of the p21 promoter. The protein is Tumor protein 63 (Tp63) of Rattus norvegicus (Rat).